Reading from the N-terminus, the 962-residue chain is MVANEQQQQQQEEERKEVKLIQSPNDNNKYRYVKLKNGLEVVLVSDETTDQSSCCLSINIGSLCNPREIEGLAHFLEHMLFLGTEKFPVEKEFVNFIYLNGGSYNGTTSPNKTNYYFTVNQESFEEALDRFSSFFISPLMNEDAVNRELNAVDSEHNNNMQKDFWRMDRIVNDQFEGHPMSMFFTGDSSTLKRDDIREKVVEFYQRYYSANLMKVCIFGRESLDQLEEYANKYFLPIVNKDVKVPKLPPLAITSKSIMIEAEPTQDMDLLKFVFPIPDEKLCFSKNYKNASASILSHILGHECQGSLFSVLFNKDYAFSLSISSNSFYENMNKIEIQIHLTKTGLENVDEVIALLFQSFEFDTPEYFFTEKKLLSEINWKSFQKSAPASTTQAITSNLFRVERPEETLKYNNFLEQFAPEKIKEIQSYLRPDNMICLFYSSTKFKGKTTEIEPHYKIKFNKRYIEQSDFDKWKSFPKNTNLFLPKENPFLPIDTTIKAPQDHSIHIPKEVYNNNGVKVYHSLDHRFNSPKARVNIRFELTSYGNNQSMVMWNLLKKSLKEVLNEKILYYLSVLDFSMKLQILTTHVELQCYCFNDIIFTALGKVFDFLMNLDLNDMQFKRIKEKVAKRFLSSHYLSPYQISMRHLSLHNFNCNSMLLDKQEYLKKVTKSEFLNYFKSLFSYINFSAMVVGNASIEDACAFGEKLNSFSNRNSACPGEVFKLARVNLPSNTITHQREFLYDTNQTNCSSSISFLIGQFNRKTYATTLVICSILGSAYFEELRTKKQFGYVVNCAQDCTGNAISMRCIVQSHTKTPEEIFDATMEFFVGFEKTLDYFKTSPSDFKDLIENCQKQNTVKQQSNSAQSSLYWSFFTFCGDFEFEKKKYEDIGKITFDDVKQYYLDHLSPNTANLRIFAAHCYPQSYQIPDEVKPFGNVKVNLLRKYEHDNFKENHGYLSSKVNLQK.

Residues 1 to 10 (MVANEQQQQQ) show a composition bias toward low complexity. Residues 1–21 (MVANEQQQQQQEEERKEVKLI) are disordered. Position 74 (histidine 74) interacts with Zn(2+). The active-site Proton acceptor is the glutamate 77. Residues histidine 78 and glutamate 155 each coordinate Zn(2+).

The protein belongs to the peptidase M16 family. Homodimer. Zn(2+) serves as cofactor.

The protein localises to the cytoplasm. In Dictyostelium discoideum (Social amoeba), this protein is Insulin-degrading enzyme homolog.